We begin with the raw amino-acid sequence, 490 residues long: Thiamine biosynthesis bifunctional protein ThiED (490 aa).

Residues 1-213 (MASNGHTLRL…PDPALAATEI (213 aa)) are thiamine-phosphate synthase. 4-amino-2-methyl-5-(diphosphooxymethyl)pyrimidine-binding positions include 50-54 (QYRNK) and Asn82. The Mg(2+) site is built by Asp83 and Asp102. Ser121 serves as a coordination point for 4-amino-2-methyl-5-(diphosphooxymethyl)pyrimidine. Position 147 to 149 (147 to 149 (SRS)) interacts with 2-[(2R,5Z)-2-carboxy-4-methylthiazol-5(2H)-ylidene]ethyl phosphate. Residue Lys150 participates in 4-amino-2-methyl-5-(diphosphooxymethyl)pyrimidine binding. Residues Gly177 and 197-198 (IS) contribute to the 2-[(2R,5Z)-2-carboxy-4-methylthiazol-5(2H)-ylidene]ethyl phosphate site. The segment at 229-490 (LTVAGSDSGG…ILAAEDVRDR (262 aa)) is hydroxymethylpyrimidine/phosphomethylpyrimidine kinase. Gln266 is a 4-amino-5-hydroxymethyl-2-methylpyrimidine binding site.

This sequence in the N-terminal section; belongs to the thiamine-phosphate synthase family. The protein in the C-terminal section; belongs to the ThiD family. It depends on Mg(2+) as a cofactor.

It carries out the reaction 2-[(2R,5Z)-2-carboxy-4-methylthiazol-5(2H)-ylidene]ethyl phosphate + 4-amino-2-methyl-5-(diphosphooxymethyl)pyrimidine + 2 H(+) = thiamine phosphate + CO2 + diphosphate. The catalysed reaction is 2-(2-carboxy-4-methylthiazol-5-yl)ethyl phosphate + 4-amino-2-methyl-5-(diphosphooxymethyl)pyrimidine + 2 H(+) = thiamine phosphate + CO2 + diphosphate. It catalyses the reaction 4-methyl-5-(2-phosphooxyethyl)-thiazole + 4-amino-2-methyl-5-(diphosphooxymethyl)pyrimidine + H(+) = thiamine phosphate + diphosphate. The enzyme catalyses 4-amino-5-hydroxymethyl-2-methylpyrimidine + ATP = 4-amino-2-methyl-5-(phosphooxymethyl)pyrimidine + ADP + H(+). It carries out the reaction 4-amino-2-methyl-5-(phosphooxymethyl)pyrimidine + ATP = 4-amino-2-methyl-5-(diphosphooxymethyl)pyrimidine + ADP. It functions in the pathway cofactor biosynthesis; thiamine diphosphate biosynthesis; 4-amino-2-methyl-5-diphosphomethylpyrimidine from 5-amino-1-(5-phospho-D-ribosyl)imidazole: step 3/3. Its pathway is cofactor biosynthesis; thiamine diphosphate biosynthesis; thiamine phosphate from 4-amino-2-methyl-5-diphosphomethylpyrimidine and 4-methyl-5-(2-phosphoethyl)-thiazole: step 1/1. Condenses 4-methyl-5-(beta-hydroxyethyl)thiazole monophosphate (THZ-P) and 2-methyl-4-amino-5-hydroxymethyl pyrimidine pyrophosphate (HMP-PP) to form thiamine monophosphate (TMP). Its function is as follows. Catalyzes the phosphorylation of hydroxymethylpyrimidine phosphate (HMP-P) to HMP-PP, and of HMP to HMP-P. This Geobacter sulfurreducens (strain ATCC 51573 / DSM 12127 / PCA) protein is Thiamine biosynthesis bifunctional protein ThiED (thiDE).